A 384-amino-acid polypeptide reads, in one-letter code: Probable inactive patatin-like protein 9 (384 aa).

The PNPLA domain maps to 33-234; sequence LSIDGGGTTG…VMNNPTAAAV (202 aa). A GXGXXG motif is present at residues 37–42; sequence GGGTTG. D221 (proton acceptor) is an active-site residue. Positions 221 to 223 match the DGA/G motif; it reads DGG. The interval 363–384 is disordered; it reads GKSSLPPSPCKESAVNPLADGR.

The protein belongs to the patatin family. In terms of tissue distribution, highly expressed in roots and at lower levels in flowers and siliques.

In Arabidopsis thaliana (Mouse-ear cress), this protein is Probable inactive patatin-like protein 9 (PLP9).